Here is a 366-residue protein sequence, read N- to C-terminus: Protein-glutamate methylesterase/protein-glutamine glutaminase of group 2 operon (366 aa).

The region spanning 19 to 136 is the Response regulatory domain; it reads RVLIVDDSAM…GQGLPAIMRD (118 aa). The residue at position 70 (Asp-70) is a 4-aspartylphosphate. A CheB-type methylesterase domain is found at 162-356; the sequence is PGASEDWIHA…ARMMLAAAAD (195 aa). Catalysis depends on residues Ser-175, His-201, and Asp-298.

Belongs to the CheB family. Post-translationally, phosphorylated by CheA. Phosphorylation of the N-terminal regulatory domain activates the methylesterase activity.

It localises to the cytoplasm. It catalyses the reaction [protein]-L-glutamate 5-O-methyl ester + H2O = L-glutamyl-[protein] + methanol + H(+). The enzyme catalyses L-glutaminyl-[protein] + H2O = L-glutamyl-[protein] + NH4(+). Its function is as follows. Involved in chemotaxis. Part of a chemotaxis signal transduction system that modulates chemotaxis in response to various stimuli. Catalyzes the demethylation of specific methylglutamate residues introduced into the chemoreceptors (methyl-accepting chemotaxis proteins or MCP) by CheR. Also mediates the irreversible deamidation of specific glutamine residues to glutamic acid. The polypeptide is Protein-glutamate methylesterase/protein-glutamine glutaminase of group 2 operon (Cereibacter sphaeroides (Rhodobacter sphaeroides)).